We begin with the raw amino-acid sequence, 176 residues long: NAD(P)H-quinone oxidoreductase subunit 6, chloroplastic (176 aa).

5 helical membrane-spanning segments follow: residues 10-30 (FLLV…VLLA), 33-53 (IYSA…YILA), 61-81 (AQLL…VMFI), 92-112 (LWTV…VSLI), and 152-172 (FFLP…GAIA).

The protein belongs to the complex I subunit 6 family. In terms of assembly, NDH is composed of at least 16 different subunits, 5 of which are encoded in the nucleus.

It localises to the plastid. The protein localises to the chloroplast thylakoid membrane. The enzyme catalyses a plastoquinone + NADH + (n+1) H(+)(in) = a plastoquinol + NAD(+) + n H(+)(out). The catalysed reaction is a plastoquinone + NADPH + (n+1) H(+)(in) = a plastoquinol + NADP(+) + n H(+)(out). Functionally, NDH shuttles electrons from NAD(P)H:plastoquinone, via FMN and iron-sulfur (Fe-S) centers, to quinones in the photosynthetic chain and possibly in a chloroplast respiratory chain. The immediate electron acceptor for the enzyme in this species is believed to be plastoquinone. Couples the redox reaction to proton translocation, and thus conserves the redox energy in a proton gradient. In Guizotia abyssinica (Niger), this protein is NAD(P)H-quinone oxidoreductase subunit 6, chloroplastic (ndhG).